We begin with the raw amino-acid sequence, 333 residues long: Anthranilate phosphoribosyltransferase (333 aa).

5-phospho-alpha-D-ribose 1-diphosphate-binding positions include G80, 83–84, T88, 90–93, 108–116, and S120; these read GD, NLST, and KHGNRSASG. An anthranilate-binding site is contributed by G80. S92 is a Mg(2+) binding site. N111 is an anthranilate binding site. Residue R166 coordinates anthranilate. Residues D224 and E225 each contribute to the Mg(2+) site.

It belongs to the anthranilate phosphoribosyltransferase family. Homodimer. Mg(2+) is required as a cofactor.

The catalysed reaction is N-(5-phospho-beta-D-ribosyl)anthranilate + diphosphate = 5-phospho-alpha-D-ribose 1-diphosphate + anthranilate. It participates in amino-acid biosynthesis; L-tryptophan biosynthesis; L-tryptophan from chorismate: step 2/5. Its function is as follows. Catalyzes the transfer of the phosphoribosyl group of 5-phosphorylribose-1-pyrophosphate (PRPP) to anthranilate to yield N-(5'-phosphoribosyl)-anthranilate (PRA). The chain is Anthranilate phosphoribosyltransferase from Pyrobaculum aerophilum (strain ATCC 51768 / DSM 7523 / JCM 9630 / CIP 104966 / NBRC 100827 / IM2).